The chain runs to 1377 residues: DNA-directed RNA polymerase subunit beta'' (1377 aa).

Zn(2+)-binding residues include Cys220, Cys291, Cys298, and Cys301.

It belongs to the RNA polymerase beta' chain family. RpoC2 subfamily. In plastids the minimal PEP RNA polymerase catalytic core is composed of four subunits: alpha, beta, beta', and beta''. When a (nuclear-encoded) sigma factor is associated with the core the holoenzyme is formed, which can initiate transcription. Requires Zn(2+) as cofactor.

It is found in the plastid. Its subcellular location is the chloroplast. It carries out the reaction RNA(n) + a ribonucleoside 5'-triphosphate = RNA(n+1) + diphosphate. Functionally, DNA-dependent RNA polymerase catalyzes the transcription of DNA into RNA using the four ribonucleoside triphosphates as substrates. This chain is DNA-directed RNA polymerase subunit beta'', found in Nandina domestica (Heavenly bamboo).